We begin with the raw amino-acid sequence, 371 residues long: Cytochrome b (371 aa).

A run of 4 helical transmembrane segments spans residues 25-45 (FGSMLLTCLALQTSTGFFLAI), 69-90 (WTMQNLHAIGASLFFMCIYTHI), 105-125 (WLSGTILLMLLMATAFFGYVL), and 170-190 (FFALHFILPFLIISLSSVHII). Heme b-binding residues include H75 and H89. Heme b is bound by residues H174 and H188. Residue H193 participates in a ubiquinone binding. 4 consecutive transmembrane segments (helical) span residues 218 to 238 (YKDMLMTTIMITLLFIIMSFS), 280 to 300 (LGGTLALLMSIMILTTTPFTH), 312 to 332 (FTQLLFWTLIATFITITWTAT), and 339 to 358 (FILISQTASVIYFSFFIINP).

This sequence belongs to the cytochrome b family. In terms of assembly, the cytochrome bc1 complex contains 3 respiratory subunits (MT-CYB, CYC1 and UQCRFS1), 2 core proteins (UQCRC1 and UQCRC2) and probably 6 low-molecular weight proteins. Requires heme b as cofactor.

The protein resides in the mitochondrion inner membrane. Functionally, component of the ubiquinol-cytochrome c reductase complex (complex III or cytochrome b-c1 complex) that is part of the mitochondrial respiratory chain. The b-c1 complex mediates electron transfer from ubiquinol to cytochrome c. Contributes to the generation of a proton gradient across the mitochondrial membrane that is then used for ATP synthesis. The protein is Cytochrome b (MT-CYB) of Elapognathus coronatus (Western crowned snake).